The chain runs to 395 residues: tRNA-specific 2-thiouridylase MnmA (395 aa).

ATP contacts are provided by residues 6 to 13 (AMSGGVDS) and Leu-32. The Nucleophile role is filled by Cys-101. Cysteines 101 and 193 form a disulfide. Gly-125 contributes to the ATP binding site. The tract at residues 143–145 (KDQ) is interaction with tRNA. Cys-193 (cysteine persulfide intermediate) is an active-site residue.

Belongs to the MnmA/TRMU family.

The protein resides in the cytoplasm. The catalysed reaction is S-sulfanyl-L-cysteinyl-[protein] + uridine(34) in tRNA + AH2 + ATP = 2-thiouridine(34) in tRNA + L-cysteinyl-[protein] + A + AMP + diphosphate + H(+). Its function is as follows. Catalyzes the 2-thiolation of uridine at the wobble position (U34) of tRNA, leading to the formation of s(2)U34. The protein is tRNA-specific 2-thiouridylase MnmA of Corynebacterium jeikeium (strain K411).